Here is a 368-residue protein sequence, read N- to C-terminus: Glutamate 5-kinase (368 aa).

Lys-9 contacts ATP. Ser-49, Asp-136, and Asn-148 together coordinate substrate. Residues 168–169 and 210–216 contribute to the ATP site; these read TD and TGGMMTK. The region spanning 275–353 is the PUA domain; sequence AGIITIDNGA…ADIENVLGYE (79 aa).

It belongs to the glutamate 5-kinase family.

It is found in the cytoplasm. The enzyme catalyses L-glutamate + ATP = L-glutamyl 5-phosphate + ADP. The protein operates within amino-acid biosynthesis; L-proline biosynthesis; L-glutamate 5-semialdehyde from L-glutamate: step 1/2. Its function is as follows. Catalyzes the transfer of a phosphate group to glutamate to form L-glutamate 5-phosphate. This chain is Glutamate 5-kinase, found in Haemophilus influenzae (strain PittEE).